Here is a 233-residue protein sequence, read N- to C-terminus: Cilia- and flagella-associated protein 299 (233 aa).

Its subcellular location is the cytoplasm. It localises to the nucleus. May be involved in spermatogenesis. The protein is Cilia- and flagella-associated protein 299 of Xenopus laevis (African clawed frog).